The primary structure comprises 287 residues: GTPase Era (287 aa).

One can recognise an Era-type G domain in the interval 11-174 (RSGFVAVIGR…RSYLASSLPE (164 aa)). GTP-binding positions include 19–26 (GRTNVGKS) and 66–70 (DTPGI). The KH type-2 domain maps to 205–273 (LRDELPQALA…PLTLRVKVQR (69 aa)).

This sequence belongs to the TRAFAC class TrmE-Era-EngA-EngB-Septin-like GTPase superfamily. Era GTPase family. As to quaternary structure, monomer.

Its subcellular location is the cytoplasm. It is found in the cell membrane. An essential GTPase that binds both GDP and GTP, with rapid nucleotide exchange. Plays a role in 16S rRNA processing and 30S ribosomal subunit biogenesis and possibly also in cell cycle regulation and energy metabolism. The polypeptide is GTPase Era (Acidimicrobium ferrooxidans (strain DSM 10331 / JCM 15462 / NBRC 103882 / ICP)).